The chain runs to 546 residues: Probable protein kinase UbiB (546 aa).

One can recognise a Protein kinase domain in the interval 123-501 (DFDETPLASA…SRRQGQARYL (379 aa)). Residues 129–137 (LASASIAQV) and lysine 152 each bind ATP. The active-site Proton acceptor is the aspartate 287. The next 2 helical transmembrane spans lie at 496 to 516 (GQAR…VFLL) and 521 to 541 (HIEW…LGWF).

Belongs to the ABC1 family. UbiB subfamily.

Its subcellular location is the cell inner membrane. It functions in the pathway cofactor biosynthesis; ubiquinone biosynthesis [regulation]. Is probably a protein kinase regulator of UbiI activity which is involved in aerobic coenzyme Q (ubiquinone) biosynthesis. The polypeptide is Probable protein kinase UbiB (Aeromonas salmonicida (strain A449)).